Here is a 589-residue protein sequence, read N- to C-terminus: Serine/threonine-protein phosphatase 2A 65 kDa regulatory subunit A alpha isoform (589 aa).

A2 carries the N-acetylalanine modification. HEAT repeat units lie at residues 8-46, 47-84, 85-123, 124-161, 162-200, 201-239, 240-278, 279-321, 322-360, 361-399, 400-438, 439-477, 478-516, 517-555, and 556-589; these read DSLY…GVER, TRSE…GGPE, YVHC…SPSD, LEAH…VSSA, VKAE…ELDN, VKSE…PQED, LEAL…GPEI, TKTD…RENV, IMSQ…GKDN, TIEH…GIRQ, LSQS…GVEF, FDEK…GKEW, AHAT…GQDI, TTKH…DNST, and LQSE…LSLA. Residues 8-399 are PP2A subunit B binding; it reads DSLYPIAVLI…CVNEVIGIRQ (392 aa). A polyoma small and medium T antigens Binding region spans residues 47–321; that stretch reads TRSELLPFLT…NLSADCRENV (275 aa). Residues 85-239 form an SV40 small T antigen binding region; it reads YVHCLLPPLE…NIAQLLPQED (155 aa). K280 is subject to N6-acetyllysine. The interval 400–589 is PP2A subunit C binding; it reads LSQSLLPAIV…QEALTVLSLA (190 aa).

It belongs to the phosphatase 2A regulatory subunit A family. In terms of assembly, PP2A consists of a common heterodimeric core enzyme, composed of PPP2CA a 36 kDa catalytic subunit (subunit C) and PPP2R1A a 65 kDa constant regulatory subunit (PR65 or subunit A), that associates with a variety of regulatory subunits. Proteins that associate with the core dimer include three families of regulatory subunits B (the R2/B/PR55/B55, R3/B''/PR72/PR130/PR59 and R5/B'/B56 families), the 48 kDa variable regulatory subunit, viral proteins, and cell signaling molecules. Found in a complex with at least ARL2, PPP2CB, PPP2R1A, PPP2R2A, PPP2R5E and TBCD. Interacts with the PP2A C catalytic subunit PPP2CA. Interacts with the PP2A B subunit PPP2R2A. Interacts with the PP2A B subunit PPP2R5D. Interacts with FOXO1; the interaction dephosphorylates FOXO1 on AKT-mediated phosphorylation sites. Interacts with IPO9. Interacts with TP53 and SGO1. Interacts with PLA2G16; this interaction might decrease PP2A activity. Interacts with CTTNBP2NL. Interacts with GNA12; the interaction promotes protein phosphatase 2A activation causing dephosphorylation of MAPT. Interacts with CIP2A; this interaction stabilizes CIP2A. Interacts with PABIR1/FAM122A. Interacts with ADCY8; antagonizes interaction between ADCY8 and calmodulin. Interacts with CRTC3 (when phosphorylated at 'Ser-391'). Interacts with SPRY2. Part of the core of STRIPAK complexes composed of PP2A catalytic and scaffolding subunits, the striatins (PP2A regulatory subunits), the striatin-associated proteins MOB4, STRIP1 and STRIP2, PDCD10 and members of the STE20 kinases, such as STK24 and STK26. Component of the Integrator-PP2A (INTAC) complex, composed of the Integrator core complex and protein phosphatase 2A subunits PPP2CA and PPP2R1A. (Microbial infection) Interacts with JC virus small t antigen; this interaction inhibits PPP2R1A activity.

The protein resides in the cytoplasm. It localises to the nucleus. Its subcellular location is the chromosome. It is found in the centromere. The protein localises to the lateral cell membrane. The protein resides in the cell projection. It localises to the dendrite. Functionally, the PR65 subunit of protein phosphatase 2A serves as a scaffolding molecule to coordinate the assembly of the catalytic subunit and a variable regulatory B subunit. Upon interaction with GNA12 promotes dephosphorylation of microtubule associated protein TAU/MAPT. Required for proper chromosome segregation and for centromeric localization of SGO1 in mitosis. Together with RACK1 adapter, mediates dephosphorylation of AKT1 at 'Ser-473', preventing AKT1 activation and AKT-mTOR signaling pathway. Dephosphorylation of AKT1 is essential for regulatory T-cells (Treg) homeostasis and stability. Part of the striatin-interacting phosphatase and kinase (STRIPAK) complexes. STRIPAK complexes have critical roles in protein (de)phosphorylation and are regulators of multiple signaling pathways including Hippo, MAPK, nuclear receptor and cytoskeleton remodeling. Different types of STRIPAK complexes are involved in a variety of biological processes such as cell growth, differentiation, apoptosis, metabolism and immune regulation. Key mediator of a quality checkpoint during transcription elongation as part of the Integrator-PP2A (INTAC) complex. The INTAC complex drives premature transcription termination of transcripts that are unfavorably configured for transcriptional elongation: within the INTAC complex, acts as a scaffolding subunit for PPP2CA, which catalyzes dephosphorylation of the C-terminal domain (CTD) of Pol II subunit POLR2A/RPB1 and SUPT5H/SPT5, thereby preventing transcriptional elongation. Regulates the recruitment of the SKA complex to kinetochores. This Homo sapiens (Human) protein is Serine/threonine-protein phosphatase 2A 65 kDa regulatory subunit A alpha isoform.